The sequence spans 472 residues: MGDVAPEVEISQYTKDKASCTRISIESYYSKRVTQCAERENRLKKLEEDMSARGLSDDEKDEKRKIHHSKETDYLRLKRTRLTVNDFESLKVIGRGAFGEVRLVQKHDTGHIYAMKILRKSEMVEKEQTAHVRAERDILSEADCDWVVKMYYSFQDYSNLYLVMEFLPGGDMMTLLIKKDTLTEEATQFYVAEAALAIQFIHNLGFIHRDIKPDNLLLDARGHVKLSDFGLCTGLKKFHRTDHYRNWPVTLPPDFISKPFESKRKAETWKRNRRAYAYSTVGTPDYIAPEVFQPNGYTKSCDWWSLGVIMYEMLIGYPPFCSELPQETYRKVINWQQTLVFPSDVPISIEAKATIKRFCCEAERRLGNHGGLDEIKQCPFFRRIDWNHIRERPPPIRVTVKSIDDTSNFDDFPDEDLSWPTSTLIRPEEQPGRRGEFVDFTYKRFDGLTQKMRYSDLKKQAKKNKKGQGSSD.

The Protein kinase domain occupies Phe-87–Phe-381. Residues Ile-93 to Val-101 and Lys-116 each bind ATP. The active-site Proton acceptor is Asp-210. The 71-residue stretch at Arg-382–Met-452 folds into the AGC-kinase C-terminal domain.

This sequence belongs to the protein kinase superfamily. AGC Ser/Thr protein kinase family. Mg(2+) serves as cofactor.

It localises to the cytoplasm. The protein resides in the nucleus. It catalyses the reaction L-seryl-[protein] + ATP = O-phospho-L-seryl-[protein] + ADP + H(+). The enzyme catalyses L-threonyl-[protein] + ATP = O-phospho-L-threonyl-[protein] + ADP + H(+). Its function is as follows. Acts with sax-2 to restrict the growth of both primary and secondary neurites. Regulates mechanosensory tiling by controlling the termination point of sensory dendrites. The chain is Serine/threonine-protein kinase sax-1 from Caenorhabditis briggsae.